The primary structure comprises 356 residues: Peptide chain release factor 1 (356 aa).

Q230 carries the N5-methylglutamine modification. Residues 279-289 (ALDSARSEARK) are compositionally biased toward basic and acidic residues. The disordered stretch occupies residues 279 to 299 (ALDSARSEARKSQVGSGDRSE).

This sequence belongs to the prokaryotic/mitochondrial release factor family. Methylated by PrmC. Methylation increases the termination efficiency of RF1.

Its subcellular location is the cytoplasm. Functionally, peptide chain release factor 1 directs the termination of translation in response to the peptide chain termination codons UAG and UAA. The protein is Peptide chain release factor 1 (prfA) of Caulobacter vibrioides (strain ATCC 19089 / CIP 103742 / CB 15) (Caulobacter crescentus).